The primary structure comprises 292 residues: Elongation factor Ts (292 aa).

The interval 79-82 (TDFV) is involved in Mg(2+) ion dislocation from EF-Tu.

The protein belongs to the EF-Ts family.

It localises to the cytoplasm. Its function is as follows. Associates with the EF-Tu.GDP complex and induces the exchange of GDP to GTP. It remains bound to the aminoacyl-tRNA.EF-Tu.GTP complex up to the GTP hydrolysis stage on the ribosome. This chain is Elongation factor Ts, found in Xanthomonas oryzae pv. oryzae (strain MAFF 311018).